A 689-amino-acid chain; its full sequence is Methionine--tRNA ligase (689 aa).

A 'HIGH' region motif is present at residues 19–29 (PYPTGDLHIGH). 4 residues coordinate Zn(2+): Cys-150, Cys-153, Cys-162, and Cys-166. Residues 338 to 342 (GLSTS) carry the 'KMSKS' region motif. Thr-341 is a binding site for ATP. One can recognise a tRNA-binding domain in the interval 591 to 689 (EFQALDLRVG…EDSEPGTKVM (99 aa)).

Belongs to the class-I aminoacyl-tRNA synthetase family. MetG type 1 subfamily. As to quaternary structure, homodimer. Requires Zn(2+) as cofactor.

The protein localises to the cytoplasm. The enzyme catalyses tRNA(Met) + L-methionine + ATP = L-methionyl-tRNA(Met) + AMP + diphosphate. Functionally, is required not only for elongation of protein synthesis but also for the initiation of all mRNA translation through initiator tRNA(fMet) aminoacylation. This Halobacterium salinarum (strain ATCC 700922 / JCM 11081 / NRC-1) (Halobacterium halobium) protein is Methionine--tRNA ligase.